The primary structure comprises 242 residues: Phosducin-like protein 2 (242 aa).

The Phosducin domain maps to 34–201; the sequence is VLRLQKEAMV…LEWKLAEVGA (168 aa). Positions 89 to 242 are thioredoxin fold; sequence FGELREISGN…SSNSDSEDTK (154 aa).

The protein belongs to the phosducin family. Interacts with the CCT chaperonin complex and actin.

The protein resides in the endoplasmic reticulum. Essential for male fertility, spermiogenesis and acrosome formation. The chain is Phosducin-like protein 2 (PDCL2) from Bos taurus (Bovine).